The following is a 346-amino-acid chain: 3 beta-hydroxysteroid dehydrogenase/Delta 5--&gt;4-isomerase (346 aa).

Residue tyrosine 147 is the Proton acceptor of the active site. Lysine 151 provides a ligand contact to NAD(+).

It belongs to the 3-beta-HSD family.

The catalysed reaction is a 3beta-hydroxy-Delta(5)-steroid + NAD(+) = a 3-oxo-Delta(5)-steroid + NADH + H(+). The enzyme catalyses a 3-oxo-Delta(5)-steroid = a 3-oxo-Delta(4)-steroid. It participates in lipid metabolism; steroid biosynthesis. Catalyzes the oxidative conversion of Delta(5)-ene-3-beta-hydroxy steroid, and the oxidative conversion of ketosteroids. The 3-beta-HSD enzymatic system plays a crucial role in the biosynthesis of all classes of hormonal steroids. During viral infection, steroid production contributes to virulence by inhibiting the host inflammatory response. The polypeptide is 3 beta-hydroxysteroid dehydrogenase/Delta 5--&gt;4-isomerase (OPG174) (Monkeypox virus).